The following is a 218-amino-acid chain: Superoxide dismutase [Mn], mitochondrial (218 aa).

His-27, His-84, Asp-174, and His-178 together coordinate Mn(2+).

It belongs to the iron/manganese superoxide dismutase family. As to quaternary structure, homotetramer. Requires Mn(2+) as cofactor.

Its subcellular location is the mitochondrion matrix. It catalyses the reaction 2 superoxide + 2 H(+) = H2O2 + O2. Its function is as follows. Destroys superoxide anion radicals which are normally produced within the cells and which are toxic to biological systems. The sequence is that of Superoxide dismutase [Mn], mitochondrial (SODA) from Chlamydomonas reinhardtii (Chlamydomonas smithii).